Here is a 110-residue protein sequence, read N- to C-terminus: uncharacterized protein (110 aa).

The interval 38–62 (SVQQNARAEEAEAAAPPAEEDSLPD) is disordered.

This is an uncharacterized protein from Mus musculus (Mouse).